The primary structure comprises 133 residues: Small ribosomal subunit protein uS9 (133 aa).

Positions 94-133 (SADNRKPLKTEGHLSRDPRAKERRKYGLKKARKAPQFSKR) are disordered. Residues 95–113 (ADNRKPLKTEGHLSRDPRA) are compositionally biased toward basic and acidic residues. Residues 114-133 (KERRKYGLKKARKAPQFSKR) show a composition bias toward basic residues.

Belongs to the universal ribosomal protein uS9 family.

In Synechococcus sp. (strain CC9605), this protein is Small ribosomal subunit protein uS9.